We begin with the raw amino-acid sequence, 320 residues long: ADP/ATP translocase 4 (320 aa).

Residues 1–20 (MSNESSKKQSSKKALFDPVS) lie on the Mitochondrial intermembrane side of the membrane. Residues 19 to 111 (VSFSKDLLAG…FAFKDKYKEL (93 aa)) form a Solcar 1 repeat. The helical transmembrane segment at 21-50 (FSKDLLAGGVAAAVSKTAVAPIERVKLLLQ) threads the bilayer. At 51-87 (VQASSKQISPEARYKGMLDCLVRIPREQGFLSYWRGN) the chain is on the mitochondrial matrix side. A helical membrane pass occupies residues 88–112 (LANVIRYFPTQALNFAFKDKYKELF). The ADP site is built by Arg-93 and Lys-105. Over 113-122 (MSGVNKEKQF) the chain is Mitochondrial intermembrane. A helical membrane pass occupies residues 123–143 (WRWFLANLASGGAAGATSLCV). Solcar repeat units lie at residues 124-214 (RWFL…VKGL) and 221-308 (TPFL…IKEF). At 144–191 (VYPLDFARTRLGVDIGKGPEQRQFTGLGDCIMKIAKSDGLIGLYQGFG) the chain is on the mitochondrial matrix side. The chain crosses the membrane as a helical span at residues 192–212 (VSVQGIIVYRASYFGAYDTVK). Over 213–223 (GLLPKPKETPF) the chain is Mitochondrial intermembrane. Residues 224–244 (LVSFIIAQIVTTCSGILSYPF) form a helical membrane-spanning segment. Over 245 to 284 (DTVRRRMMMQSGESDRQYKGTIDCFLKIYRHEGVPAFFRG) the chain is Mitochondrial matrix. Arg-248 provides a ligand contact to ADP. An important for transport activity region spans residues 248–253 (RRRMMM). The short motif at 248–253 (RRRMMM) is the Nucleotide carrier signature motif element. Residues 285–302 (AFSNILRGTGGALVLVLY) form a helical membrane-spanning segment. At 303–320 (DKIKEFLNIDVGGSSSGD) the chain is on the mitochondrial intermembrane side.

The protein belongs to the mitochondrial carrier (TC 2.A.29) family. As to quaternary structure, monomer. Specifically expressed in undifferentiated embryonic stem cells and germ cells. Expression is down-regulated after embryonic stem cells differentiation. In adults, only expressed in developing gametes in testis. In testis, expressed at higher level in spermatocytes. Expression is probably associated with entry of the male germ cells into meiosis. Expressed at very low level in Sertoli cells.

Its subcellular location is the mitochondrion inner membrane. The protein localises to the membrane. It is found in the cell projection. The protein resides in the cilium. It localises to the flagellum membrane. The enzyme catalyses ADP(in) + ATP(out) = ADP(out) + ATP(in). It catalyses the reaction dATP(out) + ADP(in) = dATP(in) + ADP(out). It carries out the reaction dADP(in) + ADP(out) = dADP(out) + ADP(in). The catalysed reaction is H(+)(in) = H(+)(out). With respect to regulation, the matrix-open state (m-state) is inhibited by the membrane-permeable bongkrekic acid (BKA). The cytoplasmic-open state (c-state) is inhibited by the membrane-impermeable toxic inhibitor carboxyatractyloside (CATR). Proton transporter activity is inhibited by ADP:ATP antiporter activity. Functionally, ADP:ATP antiporter that mediates import of ADP into the mitochondrial matrix for ATP synthesis, and export of ATP out to fuel the cell. Cycles between the cytoplasmic-open state (c-state) and the matrix-open state (m-state): operates by the alternating access mechanism with a single substrate-binding site intermittently exposed to either the cytosolic (c-state) or matrix (m-state) side of the inner mitochondrial membrane. Specifically required during spermatogenesis, probably to mediate ADP:ATP exchange in spermatocytes. Large ATP supplies from mitochondria may be critical for normal progression of spermatogenesis during early stages of meiotic prophase I, including DNA double-strand break repair and chromosomal synapsis. In addition to its ADP:ATP antiporter activity, also involved in mitochondrial uncoupling and mitochondrial permeability transition pore (mPTP) activity. Plays a role in mitochondrial uncoupling by acting as a proton transporter: proton transport uncouples the proton flows via the electron transport chain and ATP synthase to reduce the efficiency of ATP production and cause mitochondrial thermogenesis. Proton transporter activity is inhibited by ADP:ATP antiporter activity, suggesting that SLC25A31/ANT4 acts as a master regulator of mitochondrial energy output by maintaining a delicate balance between ATP production (ADP:ATP antiporter activity) and thermogenesis (proton transporter activity). Proton transporter activity requires free fatty acids as cofactor, but does not transport it. Among nucleotides, may also exchange ADP for dATP and dADP. Also plays a key role in mPTP opening, a non-specific pore that enables free passage of the mitochondrial membranes to solutes of up to 1.5 kDa, and which contributes to cell death. It is however unclear if SLC25A31/ANT4 constitutes a pore-forming component of mPTP or regulates it. The chain is ADP/ATP translocase 4 from Mus musculus (Mouse).